The following is a 1450-amino-acid chain: DNA-directed RNA polymerase RPB1 homolog (1450 aa).

It belongs to the RNA polymerase beta' chain family. Part of the viral DNA-directed RNA polymerase that consists of 8 polII-like subunits (RPB1, RPB2, RPB3, RPB5, RPB6, RPB7, RPB9, RPB10), a capping enzyme and a termination factor.

It localises to the virion. It carries out the reaction RNA(n) + a ribonucleoside 5'-triphosphate = RNA(n+1) + diphosphate. Catalytic component of the DNA-directed RNA polymerase (RNAP) that catalyzes the transcription in the cytoplasm of viral DNA into RNA using the four ribonucleoside triphosphates as substrates. Forms the polymerase active center together with RPB2. Part of the core element with the central large cleft, the clamp element that moves to open and close the cleft and the jaws that are thought to grab the incoming DNA template. This is DNA-directed RNA polymerase RPB1 homolog from African swine fever virus (strain Badajoz 1971 Vero-adapted) (Ba71V).